A 72-amino-acid polypeptide reads, in one-letter code: Conotoxin LiC53 (72 aa).

The signal sequence occupies residues 1–23 (MEKLTSLLLVAALLMLTQTLIQG). A propeptide spanning residues 24-41 (GGEDRPNKKFLQKIKSTA) is cleaved from the precursor. Intrachain disulfides connect Cys45-Cys59, Cys52-Cys63, and Cys58-Cys68.

It belongs to the conotoxin O2 superfamily. In terms of tissue distribution, expressed by the venom duct.

It localises to the secreted. The polypeptide is Conotoxin LiC53 (Conus lividus (Livid cone)).